Reading from the N-terminus, the 380-residue chain is MLIVADENIPLLDAFFAGFGEIRRVPGRSIDRATVEQADVLLVRSVTNVNRALLEGSKVRFVGTCTIGTDHLDLDYFNEAGITWSSAPGCNARGVVDYVLGSLMTLAEIEGVDLRERTYGVIGAGEVGGRLIKVLKGLGWNVKVCDPPRQAAEGGDYVSLEQIIAQCDVISLHTPLTRSGDGATWHLFDEQRLQQLKPGAWLINAARGPVVDNTALREVLLEREDLQAVLDVWEAEPQVDVSLAELCVLATPHIAGYSLDGKQRGTAQIYQAYCDFIGEPASIQLGDLLPAPWLSEVSLHADSDPAWALAMLCRGVYDPRRDDADFRRTLLGSVGEQRAAFDVLRKQYPSRREIEGLKVRIEGDSPALRQIVAALGAVAV.

Residues Ser45 and Thr66 each coordinate substrate. Residues Asp146 and Thr174 each contribute to the NAD(+) site. Arg207 is an active-site residue. Residue Asp231 participates in NAD(+) binding. Residue Glu236 is part of the active site. His253 serves as the catalytic Proton donor. Position 256 (Gly256) interacts with NAD(+). Position 257 (Tyr257) interacts with substrate.

The protein belongs to the D-isomer specific 2-hydroxyacid dehydrogenase family. PdxB subfamily. Homodimer.

The protein localises to the cytoplasm. The enzyme catalyses 4-phospho-D-erythronate + NAD(+) = (R)-3-hydroxy-2-oxo-4-phosphooxybutanoate + NADH + H(+). The protein operates within cofactor biosynthesis; pyridoxine 5'-phosphate biosynthesis; pyridoxine 5'-phosphate from D-erythrose 4-phosphate: step 2/5. Functionally, catalyzes the oxidation of erythronate-4-phosphate to 3-hydroxy-2-oxo-4-phosphonooxybutanoate. The protein is Erythronate-4-phosphate dehydrogenase of Pseudomonas fluorescens (strain Pf0-1).